Consider the following 142-residue polypeptide: Large ribosomal subunit protein uL11 (142 aa).

The protein belongs to the universal ribosomal protein uL11 family. As to quaternary structure, part of the ribosomal stalk of the 50S ribosomal subunit. Interacts with L10 and the large rRNA to form the base of the stalk. L10 forms an elongated spine to which L12 dimers bind in a sequential fashion forming a multimeric L10(L12)X complex. Post-translationally, one or more lysine residues are methylated.

In terms of biological role, forms part of the ribosomal stalk which helps the ribosome interact with GTP-bound translation factors. The polypeptide is Large ribosomal subunit protein uL11 (Haemophilus influenzae (strain 86-028NP)).